Here is a 362-residue protein sequence, read N- to C-terminus: Chorismate synthase (362 aa).

Position 46 (R46) interacts with NADP(+). FMN contacts are provided by residues 122–124, 238–239, G278, 293–297, and R319; these read RSS, NA, and KPTPS.

It belongs to the chorismate synthase family. In terms of assembly, homotetramer. Requires FMNH2 as cofactor.

It catalyses the reaction 5-O-(1-carboxyvinyl)-3-phosphoshikimate = chorismate + phosphate. It participates in metabolic intermediate biosynthesis; chorismate biosynthesis; chorismate from D-erythrose 4-phosphate and phosphoenolpyruvate: step 7/7. Its function is as follows. Catalyzes the anti-1,4-elimination of the C-3 phosphate and the C-6 proR hydrogen from 5-enolpyruvylshikimate-3-phosphate (EPSP) to yield chorismate, which is the branch point compound that serves as the starting substrate for the three terminal pathways of aromatic amino acid biosynthesis. This reaction introduces a second double bond into the aromatic ring system. The sequence is that of Chorismate synthase from Campylobacter jejuni subsp. jejuni serotype O:2 (strain ATCC 700819 / NCTC 11168).